The sequence spans 252 residues: Major prion protein (252 aa).

An N-terminal signal peptide occupies residues 1-22; it reads MANLGCWMLFLFVATWSDLGLC. The tract at residues 23–38 is interaction with ADGRG6; that stretch reads KKRPKPGGWNTGGSRY. The interaction with GRB2, ERI3 and SYN1 stretch occupies residues 23 to 229; sequence KKRPKPGGWN…ESQAYYQRGS (207 aa). The segment at 26–106 is disordered; it reads PKPGGWNTGG…QWNKPSKPKT (81 aa). 5 tandem repeats follow at residues 51 to 58, 59 to 66, 67 to 74, 75 to 82, and 83 to 90. The 5 X 8 AA tandem repeats of P-H-G-G-G-W-G-Q stretch occupies residues 51-90; sequence PQGGGWGQPHGGGWGQPHGGGWGQPHGGGWGQPHGGGWGQ. Residues 52–94 are compositionally biased toward gly residues; it reads QGGGWGQPHGGGWGQPHGGGWGQPHGGGWGQPHGGGWGQGGGT. Cu(2+) contacts are provided by His-60, Gly-61, Gly-62, His-68, Gly-69, Gly-70, His-76, Gly-77, Gly-78, His-84, Gly-85, and Gly-86. Cysteines 178 and 213 form a disulfide. 2 N-linked (GlcNAc...) asparagine glycosylation sites follow: Asn-180 and Asn-196. The GPI-anchor amidated serine moiety is linked to residue Ser-229. A propeptide spans 230-252 (removed in mature form); it reads SMVLFSSPPVILLISFLIFLIVG.

It belongs to the prion family. As to quaternary structure, monomer and homodimer. Has a tendency to aggregate into amyloid fibrils containing a cross-beta spine, formed by a steric zipper of superposed beta-strands. Soluble oligomers may represent an intermediate stage on the path to fibril formation. Copper binding may promote oligomerization. Interacts with GRB2, APP, ERI3/PRNPIP and SYN1. Mislocalized cytosolically exposed PrP interacts with MGRN1; this interaction alters MGRN1 subcellular location and causes lysosomal enlargement. Interacts with APP. Interacts with KIAA1191. Interacts with ADGRG6.

It is found in the cell membrane. The protein localises to the golgi apparatus. In terms of biological role, its primary physiological function is unclear. May play a role in neuronal development and synaptic plasticity. May be required for neuronal myelin sheath maintenance. May promote myelin homeostasis through acting as an agonist for ADGRG6 receptor. May play a role in iron uptake and iron homeostasis. Soluble oligomers are toxic to cultured neuroblastoma cells and induce apoptosis (in vitro). Association with GPC1 (via its heparan sulfate chains) targets PRNP to lipid rafts. Also provides Cu(2+) or Zn(2+) for the ascorbate-mediated GPC1 deaminase degradation of its heparan sulfate side chains. This Callithrix jacchus (White-tufted-ear marmoset) protein is Major prion protein (PRNP).